The following is a 178-amino-acid chain: Bifunctional protein PyrR (178 aa).

The PRPP-binding motif lies at 99–111 (VVLVDDVIFKGRT).

It belongs to the purine/pyrimidine phosphoribosyltransferase family. PyrR subfamily.

The enzyme catalyses UMP + diphosphate = 5-phospho-alpha-D-ribose 1-diphosphate + uracil. In terms of biological role, regulates the transcription of the pyrimidine nucleotide (pyr) operon in response to exogenous pyrimidines. Its function is as follows. Also displays a weak uracil phosphoribosyltransferase activity which is not physiologically significant. The chain is Bifunctional protein PyrR from Nostoc punctiforme (strain ATCC 29133 / PCC 73102).